A 603-amino-acid chain; its full sequence is NADH-ubiquinone oxidoreductase chain 5 (603 aa).

17 helical membrane-spanning segments follow: residues 4-24 (YATM…TTFI), 38-58 (SIVA…LCLD), 87-107 (MMFI…SLWY), 114-134 (INQF…LVTA), 140-160 (LFIG…WWYA), 171-191 (AILY…WFLL), 210-230 (LIPL…LGLH), 241-261 (TPVS…FLLI), 272-292 (LAQT…AVCA), 301-320 (IVAF…IGIG), 325-347 (AFLH…GSII), 370-390 (STSL…TGFY), 407-429 (WALS…MILL), 457-477 (LTIG…PTSV), 482-502 (IPLY…LTAL), 537-557 (IPYL…DLIW), and 582-602 (GLIK…LLLI).

It belongs to the complex I subunit 5 family. In terms of assembly, core subunit of respiratory chain NADH dehydrogenase (Complex I) which is composed of 45 different subunits.

It is found in the mitochondrion inner membrane. The catalysed reaction is a ubiquinone + NADH + 5 H(+)(in) = a ubiquinol + NAD(+) + 4 H(+)(out). In terms of biological role, core subunit of the mitochondrial membrane respiratory chain NADH dehydrogenase (Complex I) which catalyzes electron transfer from NADH through the respiratory chain, using ubiquinone as an electron acceptor. Essential for the catalytic activity and assembly of complex I. This Gorilla gorilla gorilla (Western lowland gorilla) protein is NADH-ubiquinone oxidoreductase chain 5 (MT-ND5).